A 468-amino-acid chain; its full sequence is Procollagen C-endopeptidase enhancer 1 (468 aa).

The N-terminal stretch at 1–24 (MLPAALTSLLGPFLLAWVLPLARG) is a signal peptide. N28 carries an N-linked (GlcNAc...) asparagine glycan. Disulfide bonds link C36-C62, C89-C111, C158-C185, and C212-C235. CUB domains lie at 36–148 (CGGD…YSGR) and 158–272 (CGGR…YRTL). T41 bears the Phosphothreonine mark. Residue S49 is modified to Phosphoserine. The segment at 271–341 (TLPRDAVEKE…VAPDAPSITC (71 aa)) is disordered. Positions 272–281 (LPRDAVEKES) are enriched in basic and acidic residues. Disulfide bonds link C341–C409 and C356–C460. An NTR domain is found at 341-460 (CPKQYKRSGT…ILSNLSKRKC (120 aa)). N-linked (GlcNAc...) asparagine glycosylation occurs at N454.

In terms of assembly, interacts with EFEMP2. In terms of tissue distribution, expressed at highest levels in collagen-rich tissues, especially tendon. Also expressed in cornea and sterna.

It is found in the secreted. Functionally, binds to the C-terminal propeptide of type I procollagen and enhances procollagen C-proteinase activity. This Rattus norvegicus (Rat) protein is Procollagen C-endopeptidase enhancer 1 (Pcolce).